Reading from the N-terminus, the 264-residue chain is Apolipoprotein A-I (264 aa).

Positions 1-18 are cleaved as a signal peptide; the sequence is MKAVVLTVAVLFLTGSQA. 2 repeat units span residues 67 to 88 and 89 to 110. The interval 67 to 264 is 10 X approximate tandem repeats; the sequence is LKLLDNWDSL…DEATKKLNTQ (198 aa). Position 109 is a methionine sulfoxide (Met109). The 3; half-length repeat unit spans residues 111–121; sequence KDLEEVKRKVQ. 3 consecutive repeat copies span residues 122 to 143, 144 to 165, and 166 to 187. Residues 188–207 form a 7; truncated repeat; that stretch reads PYSDELRQRLAARLEALKEG. The stretch at 208–229 is repeat 8; it reads SSFAEYQAKATEHLSALGEKAK. A 9; half-length repeat occupies 230–240; the sequence is PALEDLRQGLL. Repeat 10 spans residues 241–264; the sequence is PVLESLKLSFWSAVDEATKKLNTQ.

It belongs to the apolipoprotein A1/A4/E family. As to quaternary structure, homodimer. Interacts with APOA1BP and CLU. Component of a sperm activating protein complex (SPAP), consisting of APOA1, an immunoglobulin heavy chain, an immunoglobulin light chain and albumin. Interacts with NDRG1. Interacts with SCGB3A2. Interacts with NAXE and YJEFN3. Post-translationally, glycosylated. Palmitoylated. In terms of processing, phosphorylation sites are present in the extracellular medium.

The protein localises to the secreted. In terms of biological role, participates in the reverse transport of cholesterol from tissues to the liver for excretion by promoting cholesterol efflux from tissues and by acting as a cofactor for the lecithin cholesterol acyltransferase (LCAT). As part of the SPAP complex, activates spermatozoa motility. This Ictidomys tridecemlineatus (Thirteen-lined ground squirrel) protein is Apolipoprotein A-I (APOA1).